The primary structure comprises 850 residues: Protein STB2 (850 aa).

S594 and S625 each carry phosphoserine.

This sequence to yeast STB6. In terms of assembly, interacts with SIN3.

This is Protein STB2 (STB2) from Saccharomyces cerevisiae (strain ATCC 204508 / S288c) (Baker's yeast).